The sequence spans 258 residues: 6-carboxyhexanoate--CoA ligase (258 aa).

Belongs to the BioW family. As to quaternary structure, homodimer. Mg(2+) is required as a cofactor.

The catalysed reaction is heptanedioate + ATP + CoA = 6-carboxyhexanoyl-CoA + AMP + diphosphate. Its pathway is metabolic intermediate metabolism; pimeloyl-CoA biosynthesis; pimeloyl-CoA from pimelate: step 1/1. In terms of biological role, catalyzes the transformation of pimelate into pimeloyl-CoA with concomitant hydrolysis of ATP to AMP. The polypeptide is 6-carboxyhexanoate--CoA ligase (Bacillus spizizenii (strain ATCC 23059 / NRRL B-14472 / W23) (Bacillus subtilis subsp. spizizenii)).